The chain runs to 357 residues: Elongation factor Ts (357 aa).

Residues 82-85 form an involved in Mg(2+) ion dislocation from EF-Tu region; that stretch reads TDFV.

This sequence belongs to the EF-Ts family.

The protein localises to the cytoplasm. Associates with the EF-Tu.GDP complex and induces the exchange of GDP to GTP. It remains bound to the aminoacyl-tRNA.EF-Tu.GTP complex up to the GTP hydrolysis stage on the ribosome. This is Elongation factor Ts from Campylobacter jejuni subsp. doylei (strain ATCC BAA-1458 / RM4099 / 269.97).